Consider the following 466-residue polypeptide: 3-isopropylmalate dehydratase large subunit (466 aa).

Residues Cys-347, Cys-407, and Cys-410 each contribute to the [4Fe-4S] cluster site.

It belongs to the aconitase/IPM isomerase family. LeuC type 1 subfamily. As to quaternary structure, heterodimer of LeuC and LeuD. Requires [4Fe-4S] cluster as cofactor.

It catalyses the reaction (2R,3S)-3-isopropylmalate = (2S)-2-isopropylmalate. It participates in amino-acid biosynthesis; L-leucine biosynthesis; L-leucine from 3-methyl-2-oxobutanoate: step 2/4. In terms of biological role, catalyzes the isomerization between 2-isopropylmalate and 3-isopropylmalate, via the formation of 2-isopropylmaleate. This is 3-isopropylmalate dehydratase large subunit from Vibrio vulnificus (strain YJ016).